Consider the following 674-residue polypeptide: DNA ligase (674 aa).

NAD(+) is bound by residues 34–38 (DFEFD), 83–84 (SL), and E117. Catalysis depends on K119, which acts as the N6-AMP-lysine intermediate. Residues R140, E184, K297, and K321 each coordinate NAD(+). Residues C415, C418, C433, and C439 each contribute to the Zn(2+) site. The BRCT domain maps to 598–674 (LVNTNFEGQS…IDEDEFERML (77 aa)).

Belongs to the NAD-dependent DNA ligase family. LigA subfamily. Requires Mg(2+) as cofactor. The cofactor is Mn(2+).

It carries out the reaction NAD(+) + (deoxyribonucleotide)n-3'-hydroxyl + 5'-phospho-(deoxyribonucleotide)m = (deoxyribonucleotide)n+m + AMP + beta-nicotinamide D-nucleotide.. DNA ligase that catalyzes the formation of phosphodiester linkages between 5'-phosphoryl and 3'-hydroxyl groups in double-stranded DNA using NAD as a coenzyme and as the energy source for the reaction. It is essential for DNA replication and repair of damaged DNA. The sequence is that of DNA ligase from Chlorobaculum parvum (strain DSM 263 / NCIMB 8327) (Chlorobium vibrioforme subsp. thiosulfatophilum).